The following is a 159-amino-acid chain: MSDTAETQEAQTQEAQTPQLSMQRVFLKDISFESPRSPMIFQEEWKPEVGLELNTKSRQVGENVYEVVLEITVTVKNNGNTGYLVQVQQGGLFVISGLDDQQLHHALGAFCPATLFPYARENIDAVVVKGSFPAIMLAPINFDALYIESLQKQQAETTQ.

Belongs to the SecB family. As to quaternary structure, homotetramer, a dimer of dimers. One homotetramer interacts with 1 SecA dimer.

The protein localises to the cytoplasm. In terms of biological role, one of the proteins required for the normal export of preproteins out of the cell cytoplasm. It is a molecular chaperone that binds to a subset of precursor proteins, maintaining them in a translocation-competent state. It also specifically binds to its receptor SecA. The sequence is that of Protein-export protein SecB from Marinomonas sp. (strain MWYL1).